The chain runs to 183 residues: Large ribosomal subunit protein uL6 (183 aa).

This sequence belongs to the universal ribosomal protein uL6 family. As to quaternary structure, part of the 50S ribosomal subunit.

Its function is as follows. This protein binds to the 23S rRNA, and is important in its secondary structure. It is located near the subunit interface in the base of the L7/L12 stalk, and near the tRNA binding site of the peptidyltransferase center. This chain is Large ribosomal subunit protein uL6, found in Chlamydia felis (strain Fe/C-56) (Chlamydophila felis).